We begin with the raw amino-acid sequence, 85 residues long: Large ribosomal subunit protein bL27 (85 aa).

This sequence belongs to the bacterial ribosomal protein bL27 family.

The protein is Large ribosomal subunit protein bL27 of Vesicomyosocius okutanii subsp. Calyptogena okutanii (strain HA).